The primary structure comprises 424 residues: Putative ankyrin repeat protein R858 (424 aa).

ANK repeat units lie at residues 115–144 (HLMC…FTKR), 147–177 (TDHT…SDYF), 184–215 (INDS…SINY), and 219–252 (TGST…DIHE).

In Acanthamoeba polyphaga (Amoeba), this protein is Putative ankyrin repeat protein R858.